The following is a 660-amino-acid chain: ATPase-like fidgetin (660 aa).

2 disordered regions span residues 141–186 (KQIY…EDPF) and 209–334 (ALSS…ADSK). The segment covering 145 to 161 (SKHSPPSTSTSSIVSSS) has biased composition (low complexity). Position 177 is a phosphoserine (Ser177). A compositionally biased stretch (polar residues) spans 213–239 (DTGRSATMNSTTFPTAMKSQSTTKPTL). The span at 240 to 255 (SNSVSSPSIQVSNNQN) shows a compositional bias: low complexity. Over residues 301–313 (LNSSHDTLGSSTR) the composition is skewed to polar residues. A compositionally biased stretch (low complexity) spans 314–333 (PSSADTAGSPATSPPATADS). ATP is bound at residue 419 to 426 (GPPGTGKT).

This sequence belongs to the AAA ATPase family.

The protein localises to the nucleus. This is ATPase-like fidgetin (alf1) from Schizosaccharomyces pombe (strain 972 / ATCC 24843) (Fission yeast).